A 310-amino-acid polypeptide reads, in one-letter code: Aspartate carbamoyltransferase catalytic subunit (310 aa).

Positions 57 and 58 each coordinate carbamoyl phosphate. Residue Lys-86 coordinates L-aspartate. The carbamoyl phosphate site is built by Arg-107, His-135, and Gln-138. 2 residues coordinate L-aspartate: Arg-168 and Arg-229. Positions 268 and 269 each coordinate carbamoyl phosphate.

It belongs to the aspartate/ornithine carbamoyltransferase superfamily. ATCase family. In terms of assembly, heterooligomer of catalytic and regulatory chains.

The catalysed reaction is carbamoyl phosphate + L-aspartate = N-carbamoyl-L-aspartate + phosphate + H(+). It participates in pyrimidine metabolism; UMP biosynthesis via de novo pathway; (S)-dihydroorotate from bicarbonate: step 2/3. Catalyzes the condensation of carbamoyl phosphate and aspartate to form carbamoyl aspartate and inorganic phosphate, the committed step in the de novo pyrimidine nucleotide biosynthesis pathway. The sequence is that of Aspartate carbamoyltransferase catalytic subunit from Thermococcus onnurineus (strain NA1).